An 838-amino-acid chain; its full sequence is Axin-2 (838 aa).

Positions 1-75 are disordered; sequence MSSAVLVTLL…EGRASPDSPL (75 aa). Residues 21 to 30 carry the Tankyrase-binding motif motif; the sequence is APRPPVPGEE. Over residues 42–55 the composition is skewed to polar residues; that stretch reads KVQSTKPMPVSSNA. A compositionally biased stretch (basic and acidic residues) spans 56–69; sequence RRNEDGLGEPEGRA. Residues 81–200 form the RGS domain; that stretch reads SLHSLLGDQD…LTSDIYLEYV (120 aa). 5 disordered regions span residues 300-333, 398-435, 450-483, 568-682, and 712-744; these read SELS…KKQL, IRED…EEDP, PGCQ…LLPT, GSRG…AMPP, and VASQ…DHKE. Over residues 303–318 the composition is skewed to low complexity; that stretch reads SSDALTDDSMSMTDSS. The tract at residues 327 to 413 is interaction with GSK3B; sequence MGSKKQLQRE…KEGSEQALSS (87 aa). The interaction with beta-catenin stretch occupies residues 413–476; the sequence is SRDGAPVQHP…PDHHHHHHQQ (64 aa). The segment covering 727-737 has biased composition (polar residues); that stretch reads AGPTSFSNPSL. Residues 756 to 838 enclose the DIX domain; the sequence is ASELIVTYFF…RILGKVERID (83 aa).

Interacts with SMAD7 and RNF111. Interacts with ANKRD6. Interacts with glycogen synthase kinase-3 beta (GSK3B) and beta-catenin. The interaction between axin and beta-catenin occurs via the armadillo repeats contained in beta-catenin. Interacts with SIAH1. Interacts with SIAH2. Post-translationally, ADP-ribosylated by tankyrase TNKS and TNKS2. Poly-ADP-ribosylated protein is recognized by RNF146, followed by ubiquitination and subsequent activation of the Wnt signaling pathway. Ubiquitinated by RNF146 when poly-ADP-ribosylated, leading to its degradation and subsequent activation of the Wnt signaling pathway. Deubiquitinated by USP34, deubiquitinated downstream of beta-catenin stabilization step: deubiquitination is important Wnt signaling to positively regulate beta-catenin (CTNBB1)-mediated transcription. In terms of processing, probably phosphorylated by GSK3B and dephosphorylated by PP2A. As to expression, expressed in lung and thymus.

The protein localises to the cytoplasm. Functionally, inhibitor of the Wnt signaling pathway. Down-regulates beta-catenin. Probably facilitate the phosphorylation of beta-catenin and APC by GSK3B. This Rattus norvegicus (Rat) protein is Axin-2 (Axin2).